Reading from the N-terminus, the 144-residue chain is Bacilliredoxin BC_2157 (144 aa).

This sequence belongs to the bacilliredoxin family.

In Bacillus cereus (strain ATCC 14579 / DSM 31 / CCUG 7414 / JCM 2152 / NBRC 15305 / NCIMB 9373 / NCTC 2599 / NRRL B-3711), this protein is Bacilliredoxin BC_2157.